The primary structure comprises 104 residues: Iron-sulfur cluster assembly protein CyaY (104 aa).

Belongs to the frataxin family.

Involved in iron-sulfur (Fe-S) cluster assembly. May act as a regulator of Fe-S biogenesis. The sequence is that of Iron-sulfur cluster assembly protein CyaY from Aeromonas salmonicida (strain A449).